The chain runs to 79 residues: Acyl carrier protein (79 aa).

One can recognise a Carrier domain in the interval 2-77 (SEIGERVKKI…DATKFLEKNA (76 aa)). Serine 37 is modified (O-(pantetheine 4'-phosphoryl)serine).

Belongs to the acyl carrier protein (ACP) family. Post-translationally, 4'-phosphopantetheine is transferred from CoA to a specific serine of apo-ACP by AcpS. This modification is essential for activity because fatty acids are bound in thioester linkage to the sulfhydryl of the prosthetic group.

The protein resides in the cytoplasm. It functions in the pathway lipid metabolism; fatty acid biosynthesis. Functionally, carrier of the growing fatty acid chain in fatty acid biosynthesis. The sequence is that of Acyl carrier protein from Nitrobacter hamburgensis (strain DSM 10229 / NCIMB 13809 / X14).